A 1370-amino-acid polypeptide reads, in one-letter code: Zinc finger MYM-type protein 3 (1370 aa).

Composition is skewed to low complexity over residues 1 to 12, 40 to 56, and 130 to 146; these read MDPSDFPSPFDP, APSR…SSGA, and GAGA…EPLA. Disordered regions lie at residues 1-73 and 85-310; these read MDPS…PGGV and GLLY…MGTK. Residues 227 to 255 are compositionally biased toward basic and acidic residues; the sequence is TGKEIEKPPERVQKRSERVRRAEPPKPEV. Residues serine 265 and serine 269 each carry the phosphoserine modification. Over residues 265–281 the composition is skewed to acidic residues; sequence SDEDSDAMVDDPNDEDF. Residues lysine 310, lysine 322, and lysine 330 each participate in a glycyl lysine isopeptide (Lys-Gly) (interchain with G-Cter in SUMO2) cross-link. 9 consecutive MYM-type zinc fingers follow at residues 334-368, 380-424, 431-466, 479-513, 523-561, 569-606, 614-648, 655-694, and 701-735; these read QLFC…TKDS, HEFC…LHEV, HRLC…RPGG, KRFC…FEML, SLFC…PCYY, YQFC…KPEV, FQFC…HEKL, KSFC…GVTE, and WDFC…LETI. The segment covering 761-789 has biased composition (polar residues); it reads NLDTQSGPESLLNSQSSESKPQTPSQTKV. Residues 761 to 831 are disordered; the sequence is NLDTQSGPES…PPPPATPRKN (71 aa). Glycyl lysine isopeptide (Lys-Gly) (interchain with G-Cter in SUMO2) cross-links involve residues lysine 780 and lysine 788. Residues 790–799 are compositionally biased toward basic and acidic residues; the sequence is ENNHTVRTPD. Position 797 is a phosphothreonine (threonine 797). Lysine 806 participates in a covalent cross-link: Glycyl lysine isopeptide (Lys-Gly) (interchain with G-Cter in SUMO2). Over residues 816–827 the composition is skewed to pro residues; it reads VPTPPPPPPPAT. 2 positions are modified to phosphothreonine: threonine 818 and threonine 827. Residues lysine 848, lysine 862, lysine 921, and lysine 1276 each participate in a glycyl lysine isopeptide (Lys-Gly) (interchain with G-Cter in SUMO2) cross-link.

As to quaternary structure, may be a component of a BHC histone deacetylase complex that contains HDAC1, HDAC2, HMG20B/BRAF35, KDM1A, RCOR1/CoREST, PHF21A/BHC80, ZMYM2, ZNF217, ZMYM3, GSE1 and GTF2I. As to expression, ubiquitously expressed in all embryonic stages and adult tissues.

It localises to the nucleus. In terms of biological role, plays a role in the regulation of cell morphology and cytoskeletal organization. The sequence is that of Zinc finger MYM-type protein 3 (Zmym3) from Mus musculus (Mouse).